The chain runs to 1835 residues: Urea amidolyase (1835 aa).

ATP is bound by residues 122–129 (GAIIVGKT) and Lys747. One can recognise a Biotin carboxylation domain in the interval 632–1075 (LFDTVLIANR…STNILNSYQY (444 aa)). Residues 751–948 (RQIAQKAGVP…LVEWMIRIAA (198 aa)) enclose the ATP-grasp domain. Residue Ser803 is modified to Phosphoserine. Residues Glu830 and Asn865 each coordinate ATP. One can recognise a Biotinyl-binding domain in the interval 1754 to 1832 (DEEEDFPEGA…DSGDIVAVIE (79 aa)). Lys1798 bears the N6-biotinyllysine mark.

Monomer. The cofactor is biotin.

The catalysed reaction is urea + hydrogencarbonate + ATP = urea-1-carboxylate + ADP + phosphate + H(+). The enzyme catalyses urea-1-carboxylate + H2O + 3 H(+) = 2 NH4(+) + 2 CO2. It functions in the pathway nitrogen metabolism; urea degradation; CO(2) and NH(3) from urea (allophanate route): step 1/2. The protein operates within nitrogen metabolism; urea degradation; CO(2) and NH(3) from urea (allophanate route): step 2/2. Its function is as follows. Hydrolysis of urea to ammonia and CO(2). The chain is Urea amidolyase (DUR1,2) from Saccharomyces cerevisiae (strain ATCC 204508 / S288c) (Baker's yeast).